The following is a 195-amino-acid chain: Putative deoxynucleoside kinase (195 aa).

This chain is Putative deoxynucleoside kinase, found in Frog virus 3 (isolate Goorha) (FV-3).